We begin with the raw amino-acid sequence, 154 residues long: 6,7-dimethyl-8-ribityllumazine synthase (154 aa).

5-amino-6-(D-ribitylamino)uracil contacts are provided by residues F23, 57–59 (AFE), and 81–83 (AVI). A (2S)-2-hydroxy-3-oxobutyl phosphate-binding site is contributed by 86 to 87 (ST). The active-site Proton donor is the H89. F114 serves as a coordination point for 5-amino-6-(D-ribitylamino)uracil. R128 is a binding site for (2S)-2-hydroxy-3-oxobutyl phosphate.

Belongs to the DMRL synthase family.

It catalyses the reaction (2S)-2-hydroxy-3-oxobutyl phosphate + 5-amino-6-(D-ribitylamino)uracil = 6,7-dimethyl-8-(1-D-ribityl)lumazine + phosphate + 2 H2O + H(+). It participates in cofactor biosynthesis; riboflavin biosynthesis; riboflavin from 2-hydroxy-3-oxobutyl phosphate and 5-amino-6-(D-ribitylamino)uracil: step 1/2. Its function is as follows. Catalyzes the formation of 6,7-dimethyl-8-ribityllumazine by condensation of 5-amino-6-(D-ribitylamino)uracil with 3,4-dihydroxy-2-butanone 4-phosphate. This is the penultimate step in the biosynthesis of riboflavin. This chain is 6,7-dimethyl-8-ribityllumazine synthase, found in Syntrophotalea carbinolica (strain DSM 2380 / NBRC 103641 / GraBd1) (Pelobacter carbinolicus).